The chain runs to 187 residues: Chromophore lyase CpcS/CpeS 2 (187 aa).

It belongs to the CpcS/CpeS biliprotein lyase family.

Covalently attaches a chromophore to Cys residue(s) of phycobiliproteins. In Synechococcus sp. (strain JA-3-3Ab) (Cyanobacteria bacterium Yellowstone A-Prime), this protein is Chromophore lyase CpcS/CpeS 2.